The following is a 701-amino-acid chain: E3 ubiquitin-protein ligase RNF19B (701 aa).

Residues 1-97 (MGSEKDSESP…PAEPLSTSQA (97 aa)) form a disordered region. Residues 1–304 (MGSEKDSESP…VCGCEFCWLC (304 aa)) form a required for ubiquitin ligase activity and for protection against staurosporin-induced cell death region. Low complexity predominate over residues 57–72 (QQLHQQQQIQQQQLLQ). Residues 103–323 (ELLECPLCLV…LSPSGCTFWG (221 aa)) are TRIAD supradomain. Zn(2+)-binding residues include Cys-107, Cys-110, Cys-130, Cys-133, Cys-194, Cys-199, Cys-216, Cys-221, Cys-226, Cys-229, His-234, Cys-239, Cys-273, and Cys-276. The RING-type 1 zinc finger occupies 107 to 156 (CPLCLVRQPAEQLPELQGCSHRSCLCCLRQYLRIEITESRVQLSCPECAE). The segment at 174–239 (EKYEEFLLRR…KQAWHPNQTC (66 aa)) adopts an IBR-type zinc-finger fold. Residues 273-304 (CPRCGAYIIKMNDGSCNHMTCAVCGCEFCWLC) form an RING-type 2; atypical zinc finger. Residue Cys-288 is part of the active site. Zn(2+) contacts are provided by Cys-293, Cys-296, Cys-301, Cys-304, His-312, and Cys-319. A run of 2 helical transmembrane segments spans residues 340–360 (LIGA…AMVI) and 396–416 (IITA…IMLA). Disordered stretches follow at residues 472–495 (LEGA…PGGL) and 658–677 (AELT…HGAP).

Belongs to the RBR family. RNF19 subfamily. As to quaternary structure, interacts with UBE2L3, UBE2L6 and UCKL1.

It is found in the cytoplasmic granule membrane. Its subcellular location is the endoplasmic reticulum membrane. It carries out the reaction [E2 ubiquitin-conjugating enzyme]-S-ubiquitinyl-L-cysteine + [acceptor protein]-L-lysine = [E2 ubiquitin-conjugating enzyme]-L-cysteine + [acceptor protein]-N(6)-ubiquitinyl-L-lysine.. It functions in the pathway protein modification; protein ubiquitination. In terms of biological role, E3 ubiquitin-protein ligase which accepts ubiquitin from E2 ubiquitin-conjugating enzymes UBE2L3 and UBE2L6 in the form of a thioester and then directly transfers the ubiquitin to targeted substrates, such as UCKL1. Involved in the cytolytic activity of natural killer cells and cytotoxic T-cells. Protects against staurosporin-induced cell death. This chain is E3 ubiquitin-protein ligase RNF19B (rnf19b), found in Danio rerio (Zebrafish).